We begin with the raw amino-acid sequence, 434 residues long: MGEKKPETLDFVKDFQEYLTQQTHHVNMISGSVSSDKEAETLQGAGTDSDQNGLDHPSVEVSLDESAGMLVDGFERTFDGKLKCRYCNYASKGTARLIEHIRIHTGEKPHRCHLCPFASAYERHLEAHMRSHTGEKPYKCELCSFRCSDRSNLSHHRRRKHKMLPIKGTRPSLGNKKMWGVLQKKVSSLGYTRRTLINLSPPSMVVHKPDYLSDFAHEIPSIQSEAYESLAKASHSGVLSRDPQELMVDNPLNQLSTLAGQLSSLPPDTQNPASPDTGPCPDEKPFMIQQPPPPACASAVSTSVAQSSSPASPEGRPTHNHRNCSPMAGPSSERSGRTSTPSISNSQPSTPAPALPAQDPQLLHHCQHCDMYFADNILYTIHMGCHGFENPFQCNICGCKCKNKYDFACHFARGACCQHASRCAFRRTDDHVAK.

The interval 33-57 is disordered; sequence VSSDKEAETLQGAGTDSDQNGLDHP. 3 C2H2-type zinc fingers span residues 82–104, 110–132, and 138–161; these read LKCR…IRIH, HRCH…MRSH, and YKCE…RRKH. A compositionally biased stretch (polar residues) spans 260–274; it reads GQLSSLPPDTQNPAS. Residues 260–357 are disordered; it reads GQLSSLPPDT…PSTPAPALPA (98 aa). Residues 296-313 show a composition bias toward low complexity; that stretch reads CASAVSTSVAQSSSPASP. Residues 337–349 are compositionally biased toward polar residues; it reads RTSTPSISNSQPS. C2H2-type zinc fingers lie at residues 364 to 386 and 392 to 419; these read HHCQ…MGCH and FQCN…CCQH.

Belongs to the Ikaros C2H2-type zinc-finger protein family. In terms of assembly, probably self-associates.

The protein localises to the nucleus. Its function is as follows. Transcriptional repressor that binds the core 5'GNNTGTNG-3' DNA consensus sequence. This Xenopus tropicalis (Western clawed frog) protein is Zinc finger protein Pegasus (ikzf5).